We begin with the raw amino-acid sequence, 78 residues long: Large ribosomal subunit protein bL28 (78 aa).

The protein belongs to the bacterial ribosomal protein bL28 family.

This is Large ribosomal subunit protein bL28 from Colwellia psychrerythraea (strain 34H / ATCC BAA-681) (Vibrio psychroerythus).